The following is a 301-amino-acid chain: Probable alpha-L-glutamate ligase (301 aa).

Positions 104 to 287 (LQLLSRKGIG…VADMIFEFIE (184 aa)) constitute an ATP-grasp domain. ATP is bound by residues Lys-141, 178-179 (EF), Asp-187, and 211-213 (RSN). Mg(2+)-binding residues include Asp-248, Glu-260, and Asn-262. Residues Asp-248, Glu-260, and Asn-262 each coordinate Mn(2+).

The protein belongs to the RimK family. The cofactor is Mg(2+). Mn(2+) serves as cofactor.

This is Probable alpha-L-glutamate ligase from Vibrio atlanticus (strain LGP32) (Vibrio splendidus (strain Mel32)).